We begin with the raw amino-acid sequence, 425 residues long: Gamma-glutamyl phosphate reductase (425 aa).

The protein belongs to the gamma-glutamyl phosphate reductase family.

The protein resides in the cytoplasm. It catalyses the reaction L-glutamate 5-semialdehyde + phosphate + NADP(+) = L-glutamyl 5-phosphate + NADPH + H(+). Its pathway is amino-acid biosynthesis; L-proline biosynthesis; L-glutamate 5-semialdehyde from L-glutamate: step 2/2. In terms of biological role, catalyzes the NADPH-dependent reduction of L-glutamate 5-phosphate into L-glutamate 5-semialdehyde and phosphate. The product spontaneously undergoes cyclization to form 1-pyrroline-5-carboxylate. The protein is Gamma-glutamyl phosphate reductase of Opitutus terrae (strain DSM 11246 / JCM 15787 / PB90-1).